The sequence spans 293 residues: Adenylyl-sulfate kinase 2, chloroplastic (293 aa).

The N-terminal 59 residues, 1–59, are a transit peptide targeting the chloroplast; the sequence is MEGLAIRASRPSVFCSIPGLGGDSHRKPPSDGFLKLPASSIPADSRKLVANSTSFHPIS. ATP is bound at residue 122 to 130; the sequence is GLSGSGKST. Residues D152, R155, R169, N172, 195–196, and G245 each bind substrate; that span reads IS. S196 acts as the Phosphoserine intermediate in catalysis.

The protein belongs to the APS kinase family. In terms of assembly, interacts with APK1. Expressed in root vasculature, root tips, leaf epidermal cells and funiculus of developing seeds.

It localises to the plastid. The protein localises to the chloroplast. The enzyme catalyses adenosine 5'-phosphosulfate + ATP = 3'-phosphoadenylyl sulfate + ADP + H(+). It participates in sulfur metabolism; hydrogen sulfide biosynthesis; sulfite from sulfate: step 2/3. In terms of biological role, catalyzes the synthesis of activated sulfate. Essential for plant reproduction and viability. Required for the production of glucosinolates. The chain is Adenylyl-sulfate kinase 2, chloroplastic (APK2) from Arabidopsis thaliana (Mouse-ear cress).